We begin with the raw amino-acid sequence, 520 residues long: Tetratricopeptide repeat protein 6 (520 aa).

TPR repeat units follow at residues 57–90 (MTMC…ISHS), 101–138 (ADCL…DKNS), 139–172 (YTAF…DATE), 176–209 (LNTF…SRTN), 210–243 (GSLC…NPCF), 245–280 (DAYV…NPAY), 281–314 (IKAR…DPKN), 320–347 (GRAV…ISTT), 348–381 (AEFL…NPKY), 382–415 (SLAY…DPEN), 416–449 (EYVL…CPFW), 450–483 (AAVY…KPND), and 484–517 (ALVY…EDYA).

The polypeptide is Tetratricopeptide repeat protein 6 (Homo sapiens (Human)).